The sequence spans 644 residues: Large subunit GTPase 1 homolog (644 aa).

The interval 1-31 is disordered; it reads MGRRRAPGGGSLGRVLIRQQTQRSRSHRHTD. Ser-93 and Ser-97 each carry phosphoserine. In terms of domain architecture, CP-type G spans 164–430; the sequence is WRQLWRVIER…LCDCPGLVMP (267 aa). 212–215 is a GTP binding site; that stretch reads NKAD. The interval 253–345 is disordered; that stretch reads KEEVDSVAGD…KNAENQQVNN (93 aa). Residues 302–326 show a composition bias toward acidic residues; that stretch reads CQEDEEEDWQTCSEEDSVPEEEEGC. GTP-binding positions include 379-386 and 423-426; these read GYPNVGKS and DCPG. A disordered region spans residues 618 to 644; the sequence is VPGKPWKKHGNRNKKEKSRRLYKHLDV. The span at 622-644 shows a compositional bias: basic residues; sequence PWKKHGNRNKKEKSRRLYKHLDV.

The protein belongs to the TRAFAC class YlqF/YawG GTPase family. LSG1 subfamily.

The protein localises to the cytoplasm. The protein resides in the endoplasmic reticulum. Its subcellular location is the nucleus. It localises to the cajal body. The enzyme catalyses GTP + H2O = GDP + phosphate + H(+). Functionally, functions as a GTPase. May act by mediating the release of NMD3 from the 60S ribosomal subunit after export into the cytoplasm during the 60S ribosomal subunit maturation. This is Large subunit GTPase 1 homolog from Mus musculus (Mouse).